Consider the following 244-residue polypeptide: uncharacterized protein (244 aa).

Residues 7-74 (VKEKDQVVAH…YHRGAFIERF (68 aa)) form the HTH gntR-type domain. The segment at residues 34 to 53 (RNEIAHGLGVSRVPIQEALV) is a DNA-binding region (H-T-H motif).

This is an uncharacterized protein from Mycobacterium tuberculosis (strain CDC 1551 / Oshkosh).